The following is a 292-amino-acid chain: Shikimate dehydrogenase (NADP(+)) (292 aa).

Shikimate-binding positions include 22–24 and Ser69; that span reads SLS. Residue Lys73 is the Proton acceptor of the active site. 2 residues coordinate shikimate: Asn94 and Asp111. Residues 135–139 and Ile236 contribute to the NADP(+) site; that span reads GVGGA. Tyr238 contacts shikimate. Gly260 contacts NADP(+).

This sequence belongs to the shikimate dehydrogenase family. In terms of assembly, homodimer.

It catalyses the reaction shikimate + NADP(+) = 3-dehydroshikimate + NADPH + H(+). The protein operates within metabolic intermediate biosynthesis; chorismate biosynthesis; chorismate from D-erythrose 4-phosphate and phosphoenolpyruvate: step 4/7. In terms of biological role, involved in the biosynthesis of the chorismate, which leads to the biosynthesis of aromatic amino acids. Catalyzes the reversible NADPH linked reduction of 3-dehydroshikimate (DHSA) to yield shikimate (SA). The sequence is that of Shikimate dehydrogenase (NADP(+)) from Streptococcus pyogenes serotype M3 (strain ATCC BAA-595 / MGAS315).